Reading from the N-terminus, the 257-residue chain is UPF0246 protein ECA3888 (257 aa).

Belongs to the UPF0246 family.

This Pectobacterium atrosepticum (strain SCRI 1043 / ATCC BAA-672) (Erwinia carotovora subsp. atroseptica) protein is UPF0246 protein ECA3888.